We begin with the raw amino-acid sequence, 150 residues long: Large ribosomal subunit protein bL9 (150 aa).

Belongs to the bacterial ribosomal protein bL9 family.

Binds to the 23S rRNA. The sequence is that of Large ribosomal subunit protein bL9 from Ralstonia nicotianae (strain ATCC BAA-1114 / GMI1000) (Ralstonia solanacearum).